The primary structure comprises 278 residues: Urease accessory protein UreD (278 aa).

This sequence belongs to the UreD family. UreD, UreF and UreG form a complex that acts as a GTP-hydrolysis-dependent molecular chaperone, activating the urease apoprotein by helping to assemble the nickel containing metallocenter of UreC. The UreE protein probably delivers the nickel.

The protein resides in the cytoplasm. In terms of biological role, required for maturation of urease via the functional incorporation of the urease nickel metallocenter. The protein is Urease accessory protein UreD of Escherichia coli.